A 685-amino-acid chain; its full sequence is Stromal interaction molecule 1 (685 aa).

An N-terminal signal peptide occupies residues 1–22; that stretch reads MDVCARLALWLLWGLLLHQGQS. Topologically, residues 23–213 are extracellular; that stretch reads LSHSHSEKNT…LLTRHNHLKD (191 aa). The disordered stretch occupies residues 24-43; that stretch reads SHSHSEKNTGASSGATSEES. Low complexity predominate over residues 32–41; sequence TGASSGATSE. EF-hand domains are found at residues 64–97 and 102–126; these read SFEAVRNIHKLMDDDANGDVDVEESDEFLREDLN and TVKHSTFHGEDKLISVEDLWKAWKA. Ca(2+) contacts are provided by aspartate 76, aspartate 78, asparagine 80, aspartate 82, and glutamate 87. N-linked (GlcNAc...) asparagine glycans are attached at residues asparagine 131 and asparagine 171. An SAM domain is found at 132-200; it reads WTVDEVIQWL…QLKALDTVLF (69 aa). The helical transmembrane segment at 214 to 234 threads the bilayer; sequence FMLVVSIVIGVGGCWFAYIQN. At 235–685 the chain is on the cytoplasmic side; the sequence is RYSKEHMKKM…LKIFKKPLKK (451 aa). Residues 248–442 are a coiled coil; sequence LEGLHRAEQS…IEILCGFQIV (195 aa). Phosphoserine is present on serine 257. The segment at 344-442 is SOAR/CAD; sequence PEALQKWLQL…IEILCGFQIV (99 aa). Positions 475-483 are contributes to fast Ca(2+)-dependent inactivation of CRAC channels; sequence DDVDDMDEE. Residues 490 to 499 show a composition bias toward low complexity; that stretch reads MQSPSLQSSV. The disordered stretch occupies residues 490–542; sequence MQSPSLQSSVRQRLTEPQHGLGSQRDLTHSDSESSLHTSDRQRVAPKPPQMGR. Threonine 504 bears the Phosphothreonine mark. Serine 512 carries the phosphoserine modification. Over residues 515-532 the composition is skewed to basic and acidic residues; that stretch reads DLTHSDSESSLHTSDRQR. Threonine 517 carries the phosphothreonine modification. 11 positions are modified to phosphoserine: serine 519, serine 521, serine 523, serine 524, serine 567, serine 575, serine 602, serine 608, serine 618, serine 621, and serine 628. The segment at 596 to 685 is disordered; sequence LMELNPSVPP…LKIFKKPLKK (90 aa). A compositionally biased stretch (low complexity) spans 608–620; it reads SPLLDSSHSHSPS. The short motif at 642-645 is the Microtubule tip localization signal element; it reads TRIP. Residues 655–666 are compositionally biased toward acidic residues; the sequence is EEDNGSIGEETD. Position 660 is a phosphoserine (serine 660). Position 665 is a phosphothreonine (threonine 665). At serine 668 the chain carries Phosphoserine. A compositionally biased stretch (basic residues) spans 670-685; it reads GRKKFPLKIFKKPLKK. Positions 672-685 are required for generation of inwardly rectifying CRAC currents; that stretch reads KKFPLKIFKKPLKK.

Monomer in the presence of Ca(2+). It oligomerizes in absence of Ca(2+). Forms homooligomers and heterooligomers with STIM2. Interacts with pore-forming subunits of CRAC channels, ORAI1, ORAI2 and ORAI3; this interaction is potentiated upon Ca(2+) store depletion. Interacts (via the transmembrane region and the SOAR/CAD domain) with SPPL3; the interaction promotes the binding of STIM1 to ORAI1. Interacts with ORAI1. Interacts with MAPRE1; probably required for targeting to the growing microtubule plus ends. Interacts with CRACR2A/EFCAB4B; the interaction is direct and takes place in absence of Ca(2+). Forms a complex with CRACR2A/EFCAB4B and ORAI1 at low concentration of Ca(2+), the complex dissociates at elevated Ca(2+) concentrations. Interacts with SARAF, promoting a slow inactivation of STIM1-dependent SOCE activity, possibly by facilitating the deoligomerization of STIM1. Interacts with EFHB; the interaction takes place upon Ca(2+)-store depletion and inhibits the association with SARAF. Interacts with ASPH. Interacts with SLC35G1; intracellular Ca(2+)-dependent. May interact with ATP1A1, ATP2A2, ATP2B1, ATP2B4, KPNB1 and XPO1; through SLC35G1. Interacts with TMEM203. Interacts with STIMATE, promoting STIM1 conformational switch. Interacts with TMEM178A. Interacts with CASQ1 (via C-terminal end and preferentially with the monomeric form); this interaction increases in response to a depletion of intracellular Ca(2+), decreases both STIM1 aggregation and clustering, interaction of STIM1 with ORAI1 and store-operated Ca(2+) entry (SOCE) activity. Interacts with ADCY8. Glycosylation is required for cell surface expression. Post-translationally, phosphorylated predominantly on Ser residues.

The protein resides in the cell membrane. The protein localises to the endoplasmic reticulum membrane. It is found in the sarcoplasmic reticulum. It localises to the cytoplasm. Its subcellular location is the cytoskeleton. In terms of biological role, acts as a Ca(2+) sensor that gates two major inward rectifying Ca(2+) channels at the plasma membrane: Ca(2+) release-activated Ca(2+) (CRAC) channels and arachidonate-regulated Ca(2+)-selective (ARC) channels. Plays a role in mediating store-operated Ca(2+) entry (SOCE), a Ca(2+) influx following depletion of intracellular Ca(2+) stores. Upon Ca(2+) depletion, translocates from the endoplasmic reticulum to the plasma membrane where it activates CRAC channel pore-forming subunits ORA1, ORA2 and ORAI3 to generate sustained and oscillatory Ca(2+) entry. Involved in enamel formation. This Rattus norvegicus (Rat) protein is Stromal interaction molecule 1.